Reading from the N-terminus, the 229-residue chain is Large ribosomal subunit protein uL1 (229 aa).

This sequence belongs to the universal ribosomal protein uL1 family. In terms of assembly, part of the 50S ribosomal subunit.

Functionally, binds directly to 23S rRNA. The L1 stalk is quite mobile in the ribosome, and is involved in E site tRNA release. Its function is as follows. Protein L1 is also a translational repressor protein, it controls the translation of the L11 operon by binding to its mRNA. The polypeptide is Large ribosomal subunit protein uL1 (Actinobacillus pleuropneumoniae serotype 5b (strain L20)).